Here is a 581-residue protein sequence, read N- to C-terminus: MQRDEERPIDFGMSLELPKTPNDVNYVKKLITQILYLQTLVSEQQKKIESSTLEVQKKKDQIRELERIYEMNPKSFLTLRRTPALKLLPETLSVELSNEVNLTSSTTSSCVKPSPYLTNCNLKNKDTFPVSKNNCSLSSGIFTNSNGTNNCFSTHPKSLDDAKDNVVPKKLNDTDQFPLWSKNETIDPIDLGYSFISPFSMSFASKGNEILDPGESTNKNLFYEFPNGTTEPFEKNSVHSGKETLQYSATISKWKAMIEQIIFQNDQAASLSLQQQLKNEDIEDNINLINTILPFSVTLMKNKFGNFLIQKCFEYSTEAQLQSFSYFLKKHVKELSIDAFGSHVLQKSLEIYPERFTNNLIEELIECLPATLMQRHSCHVWQKFFETRRKSLVDGIFDHFNKKMQGKWLQVSVSEMGSLVVQTIFENCKEKDKRTCLDEIINNMDQIICGQWGNWVIQHIIEHGSEPDKQRILNSLLKEVESYSTNRYASKVVERALRVCHVTFFDRYVKEITTPQNELPTIFLQEIASNQYGNYIVQYLLQVATPSQINLMAEHLKKHMVSLRGHKYGQRIAALVEKSKS.

A PUM-HD domain is found at 225-580 (FPNGTTEPFE…RIAALVEKSK (356 aa)). Pumilio repeat units lie at residues 291–326 (TILP…SFSY), 327–362 (FLKK…NLIE), 363–398 (ELIE…GIFD), 403–438 (KMQG…TCLD), 439–474 (EIIN…RILN), 475–510 (SLLK…RYVK), 518–554 (ELPT…LMAE), and 555–581 (HLKK…KSKS).

Its function is as follows. RNA-binding protein essential for meiotic progression. This chain is Meiotic PUF family protein 1 (mpf1), found in Schizosaccharomyces pombe (strain 972 / ATCC 24843) (Fission yeast).